Here is a 927-residue protein sequence, read N- to C-terminus: Sodium/calcium exchanger 3 (927 aa).

A signal peptide spans 1–30 (MAWLRLQPLTSAFLHFGLVTFVLFLNGLRA). At 31–73 (EAGGSGDVPSTGQNNESCSGSSDCKEGVILPIWYPENPSLGDK) the chain is on the extracellular side. The N-linked (GlcNAc...) asparagine glycan is linked to Asn45. Residues 74-94 (IARVIVYFVALIYMFLGVSII) traverse the membrane as a helical segment. The Cytoplasmic segment spans residues 95 to 147 (ADRFMASIEVITSQEREVTIKKPNGETSTTTIRVWNETVSNLTLMALGSSAPE). The Alpha-1 repeat unit spans residues 140–180 (ALGSSAPEILLSLIEVCGHGFIAGDLGPSTIVGSAAFNMFI). Residues 148-168 (ILLSLIEVCGHGFIAGDLGPS) traverse the membrane as a helical segment. Residue Thr169 is a topological domain, extracellular. Residues 170 to 190 (IVGSAAFNMFIIIGICVYVIP) traverse the membrane as a helical segment. Topologically, residues 191 to 202 (DGETRKIKHLRV) are cytoplasmic. The helical transmembrane segment at 203–223 (FFITAAWSIFAYIWLYMILAV) threads the bilayer. Over 224 to 230 (FSPGVVQ) the chain is Extracellular. A helical transmembrane segment spans residues 231-251 (VWEGLLTLFFFPVCVLLAWVA). The Cytoplasmic portion of the chain corresponds to 252-726 (DKRLLFYKYM…DESGEERLPS (475 aa)). Positions 253–272 (KRLLFYKYMHKKYRTDKHRG) are putative calmodulin-binding region. 2 Calx-beta domains span residues 386–485 (VHTD…VRLS) and 519–619 (ATVT…IALG). Glu409, Asp445, Asp470, Asp471, Ile473, Glu475, Glu478, Asp525, Asp526, Asp527, Glu543, Asp579, Glu606, Glu607, and Glu672 together coordinate Ca(2+). Residues 727-747 (CFDYVMHFLTVFWKVLFACVP) form a helical membrane-spanning segment. At 748–754 (PTEYCHG) the chain is on the extracellular side. A helical membrane pass occupies residues 755 to 775 (WACFAVSILIIGMLTAIIGDL). The Cytoplasmic segment spans residues 776–778 (ASH). The helical transmembrane segment at 779–799 (FGCTIGLKDSVTAVVFVAFGT) threads the bilayer. An Alpha-2 repeat occupies 796 to 832 (AFGTSVPDTFASKAAALQDVYADASIGNVTGSNAVNV). Topologically, residues 800–828 (SVPDTFASKAAALQDVYADASIGNVTGSN) are extracellular. N-linked (GlcNAc...) asparagine glycosylation occurs at Asn823. A helical membrane pass occupies residues 829–849 (AVNVFLGIGLAWSVAAIYWAL). The Cytoplasmic segment spans residues 850–860 (QGQEFHVSAGT). A helical transmembrane segment spans residues 861–881 (LAFSVTLFTIFAFVCISVLLY). Residues 882–903 (RRRPHLGGELGGPRGCKLATTW) are Extracellular-facing. The chain crosses the membrane as a helical span at residues 904–924 (LFVSLWLLYILFATLEAYCYI). Topologically, residues 925–927 (KGF) are cytoplasmic.

This sequence belongs to the Ca(2+):cation antiporter (CaCA) (TC 2.A.19) family. SLC8 subfamily. As to quaternary structure, interacts with AKAP1. In terms of tissue distribution, isoform 2 is expressed in brain and skeletal muscle. Isoform 3 is expressed in excitable cells of brain, retina and skeletal muscle. Isoform 4 is expressed in skeletal muscle.

The protein localises to the cell membrane. The protein resides in the perikaryon. It is found in the cell projection. Its subcellular location is the dendrite. It localises to the dendritic spine. The protein localises to the sarcolemma. The protein resides in the cytoplasm. It is found in the sarcoplasm. Its subcellular location is the cell junction. It localises to the mitochondrion outer membrane. The protein localises to the perinuclear region. The protein resides in the endoplasmic reticulum membrane. The enzyme catalyses Ca(2+)(in) + 3 Na(+)(out) = Ca(2+)(out) + 3 Na(+)(in). With respect to regulation, calcium transport is down-regulated by Na(+) and stimulated by Ca(2+). In terms of biological role, mediates the electrogenic exchange of Ca(2+) against Na(+) ions across the cell membrane, and thereby contributes to the regulation of cytoplasmic Ca(2+) levels and Ca(2+)-dependent cellular processes. Contributes to cellular Ca(2+) homeostasis in excitable cells, both in muscle and in brain. In a first phase, voltage-gated channels mediate the rapid increase of cytoplasmic Ca(2+) levels due to release of Ca(2+) stores from the endoplasmic reticulum. SLC8A3 mediates the export of Ca(2+) from the cell during the next phase, so that cytoplasmic Ca(2+) levels rapidly return to baseline. Contributes to Ca(2+) transport during excitation-contraction coupling in muscle. In neurons, contributes to the rapid decrease of cytoplasmic Ca(2+) levels back to baseline after neuronal activation, and thereby contributes to modulate synaptic plasticity, learning and memory. Required for normal oligodendrocyte differentiation and for normal myelination. Mediates Ca(2+) efflux from mitochondria and contributes to mitochondrial Ca(2+) ion homeostasis. This chain is Sodium/calcium exchanger 3 (SLC8A3), found in Homo sapiens (Human).